We begin with the raw amino-acid sequence, 292 residues long: Fat storage-inducing transmembrane protein 1 (292 aa).

Over 1–18 (MERGPTVGAGLGAGTRVR) the chain is Lumenal. Residues 19 to 39 (ALLGCLVKVLLWVASALLYFG) traverse the membrane as a helical segment. Residues 40-54 (SEQAARLLGSPCLRR) lie on the Cytoplasmic side of the membrane. The chain crosses the membrane as a helical span at residues 55–75 (LYHAWLAAVVIFGPLLQFHVN). The Lumenal segment spans residues 76 to 94 (SRTIFASHGNFFNIKFVNS). The chain crosses the membrane as a helical span at residues 95–115 (AWGWTCTFLGGFVLLVVFLAT). The Cytoplasmic portion of the chain corresponds to 116–141 (RRVAVTARHLSRLVVGAAVWRGAGRA). The helical transmembrane segment at 142–162 (FLLIEDLTGSCFEPLPQGLLL) threads the bilayer. Over 163 to 187 (HELPDRKSCLAAGHQWRGYTVSSHT) the chain is Lumenal. H186 is an active-site residue. The chain crosses the membrane as a helical span at residues 188–208 (FLLTFCCLLMAEEAAVFAKYL). Over 209–220 (AHGLPAGAPLRL) the chain is Cytoplasmic. The chain crosses the membrane as a helical span at residues 221-241 (VFLLNVLLLGLWNFLLLCTVI). Residues 242–249 (YFHQYTHK) lie on the Lumenal side of the membrane. H244 is an active-site residue. The helical transmembrane segment at 250–270 (VVGAAVGTFAWYLTYGSWYHQ) threads the bilayer. The Cytoplasmic segment spans residues 271 to 292 (PWSPGIPGHGLFPRSRSMRKHN).

The protein belongs to the FIT family. FIT1 subfamily. Predominantly expressed in skeletal muscle and at lower levels in the heart (at protein level). In the heart, mRNA expression levels do not correlate well with protein levels, suggesting post-transcriptional regulation in this organ.

It is found in the endoplasmic reticulum membrane. In terms of biological role, plays an important role in the formation of lipid droplets (LDs) which are storage organelles at the center of lipid and energy homeostasis. Directly binds to diacylglycerol (DAGs) and triacylglycerol. In Mus musculus (Mouse), this protein is Fat storage-inducing transmembrane protein 1.